Consider the following 816-residue polypeptide: Leucine--tRNA ligase (816 aa).

The short motif at 40-51 (SYPSGSQLHAGH) is the 'HIGH' region element. The 'KMSKS' region signature appears at 576-580 (KMSKS). Position 579 (K579) interacts with ATP.

It belongs to the class-I aminoacyl-tRNA synthetase family.

The protein localises to the cytoplasm. It carries out the reaction tRNA(Leu) + L-leucine + ATP = L-leucyl-tRNA(Leu) + AMP + diphosphate. In Clostridium perfringens (strain SM101 / Type A), this protein is Leucine--tRNA ligase.